The sequence spans 561 residues: Asparagine synthetase [glutamine-hydrolyzing] (561 aa).

C2 functions as the For GATase activity in the catalytic mechanism. Positions 2–191 constitute a Glutamine amidotransferase type-2 domain; it reads CGIWALFGSD…PGHYEVLDLK (190 aa). L-glutamine contacts are provided by residues 49 to 53, 75 to 77, and D97; these read RLAVV and NGE. The Asparagine synthetase domain maps to 213-536; sequence HALYDSVEKL…PGRADWLTHY (324 aa). Residues L256, I288, and 363-364 contribute to the ATP site; that span reads SG. Position 385 is an N6-acetyllysine (K385). T545 is subject to Phosphothreonine. Residue S557 is modified to Phosphoserine.

It carries out the reaction L-aspartate + L-glutamine + ATP + H2O = L-asparagine + L-glutamate + AMP + diphosphate + H(+). It functions in the pathway amino-acid biosynthesis; L-asparagine biosynthesis; L-asparagine from L-aspartate (L-Gln route): step 1/1. This is Asparagine synthetase [glutamine-hydrolyzing] (ASNS) from Mesocricetus auratus (Golden hamster).